Reading from the N-terminus, the 382-residue chain is MSDTKVYRASTTAPVNIAVVKYWGKRDAKLNLPTNSSLSVTLSQDDLRTLTTASCSSTFTDGDSLTLNGESSDISGARTQACFRELRSRRAALEQADSSLPKLSSYPLKIVSENNFPTAAGLASSAAGFAALVQAIAFLYELPDSPSDLSLIARQGSGSACRSLFGGYVAWRMGEKEDGSDSKADLVAPASHWPEMRALILVASAAKKGVSSTSGMQQTVATSGLFKERITNVVPANMALMEEAIKDKDFPKFAEVTMRESNSFHATCADTYPPIFYMNDISRAAIRAVECINEKVGRTVAAYTFDAGPNCVIYYEEKDADIIVGAFYQALQGVGGFKEGAASARSSIEFDATLASTLKEGVSRVISTGVGEGPVKTDEFLA.

(R)-5-diphosphomevalonate is bound by residues 22–25, R78, 157–162, and T213; these read YWGK and SGSACR.

Belongs to the diphosphomevalonate decarboxylase family. In terms of assembly, homodimer.

The enzyme catalyses (R)-5-diphosphomevalonate + ATP = isopentenyl diphosphate + ADP + phosphate + CO2. It functions in the pathway isoprenoid biosynthesis; isopentenyl diphosphate biosynthesis via mevalonate pathway; isopentenyl diphosphate from (R)-mevalonate: step 3/3. In terms of biological role, diphosphomevalonate decarboxylase; part of the second module of ergosterol biosynthesis pathway that includes the middle steps of the pathway. MVD1 converts diphosphomevalonate into isopentenyl diphosphate. The second module is carried out in the vacuole and involves the formation of farnesyl diphosphate, which is also an important intermediate in the biosynthesis of ubiquinone, dolichol, heme and prenylated proteins. Activity by the mevalonate kinase ERG12 (FG05912) first converts mevalonate into 5-phosphomevalonate. 5-phosphomevalonate is then further converted to 5-diphosphomevalonate by the phosphomevalonate kinase ERG8 (FG09764). The diphosphomevalonate decarboxylase ERG19 (FG10424) then produces isopentenyl diphosphate. The isopentenyl-diphosphate delta-isomerase IDI1 (FG09722) then catalyzes the 1,3-allylic rearrangement of the homoallylic substrate isopentenyl (IPP) to its highly electrophilic allylic isomer, dimethylallyl diphosphate (DMAPP). Finally the farnesyl diphosphate synthase ERG20 (FG06784) catalyzes the sequential condensation of isopentenyl pyrophosphate with dimethylallyl pyrophosphate, and then with the resultant geranylpyrophosphate to the ultimate product farnesyl pyrophosphate. The polypeptide is Diphosphomevalonate decarboxylase ERG19 (Gibberella zeae (strain ATCC MYA-4620 / CBS 123657 / FGSC 9075 / NRRL 31084 / PH-1) (Wheat head blight fungus)).